A 727-amino-acid chain; its full sequence is LIM domain-binding protein 3 (727 aa).

A PDZ domain is found at 1-84 (MSYSVTLTGP…NLSLTLQKSK (84 aa)). Phosphoserine is present on residues Ser-44, Ser-121, and Ser-123. The interval 86–197 (PIPISTTAPP…GSSQPRQYNN (112 aa)) is disordered. Low complexity predominate over residues 140-156 (PTFSPAFSRPSAFSSLA). A compositionally biased stretch (polar residues) spans 188 to 197 (GSSQPRQYNN). Ser-217 is modified (phosphoserine). An Omega-N-methylarginine modification is found at Arg-219. Residue Ser-223 is modified to Phosphoserine. 2 disordered regions span residues 284 to 440 (TEFM…YTPS) and 472 to 529 (APSV…PQVP). Positions 312–385 (ATTPLLPASA…SAPATHTSYS (74 aa)) are enriched in low complexity. A compositionally biased stretch (pro residues) spans 428–440 (PYTPSPAPAYTPS). The segment covering 494–513 (DSFSQKFAPGKSTTSISKQT) has biased composition (polar residues). Arg-516 and Arg-533 each carry omega-N-methylarginine. 3 consecutive LIM zinc-binding domains span residues 549–607 (PLCG…QFFA), 608–667 (PLCA…LFST), and 668–727 (KCHG…TINL).

Interacts via its LIM domains with various PKC isoforms. Interacts via its PDZ domain with the ACTN2 C-terminal region. Interacts with MYOZ1, MYOZ2 and MYOZ3. Expressed primarily in skeletal muscle and to a lesser extent in heart. Also detected in brain and placenta.

The protein resides in the cytoplasm. The protein localises to the perinuclear region. It localises to the cell projection. Its subcellular location is the pseudopodium. It is found in the cytoskeleton. The protein resides in the myofibril. The protein localises to the sarcomere. It localises to the z line. Functionally, may function as an adapter in striated muscle to couple protein kinase C-mediated signaling via its LIM domains to the cytoskeleton. The protein is LIM domain-binding protein 3 of Homo sapiens (Human).